The chain runs to 416 residues: Formyl-CoA:oxalate CoA-transferase (416 aa).

Residues 17–18, Arg-38, 72–75, 96–98, His-104, and 137–140 contribute to the CoA site; these read QS, LNTK, NFH, and KAYE. Asp-169 functions as the Nucleophile in the catalytic mechanism. 248 to 250 is a substrate binding site; it reads GGQ. CoA is bound at residue 273–275; it reads QEQ.

This sequence belongs to the CoA-transferase III family. Frc subfamily. Homodimer.

The enzyme catalyses formyl-CoA + oxalate = oxalyl-CoA + formate. It functions in the pathway metabolic intermediate degradation; oxalate degradation; CO(2) and formate from oxalate: step 1/2. Involved in the catabolism of oxalate and in the adapatation to low pH via the induction of the oxalate-dependent acid tolerance response (ATR). Catalyzes the transfer of the CoA moiety from formyl-CoA to oxalate. This is Formyl-CoA:oxalate CoA-transferase from Escherichia coli (strain ATCC 8739 / DSM 1576 / NBRC 3972 / NCIMB 8545 / WDCM 00012 / Crooks).